Reading from the N-terminus, the 392-residue chain is Dual-specificity RNA methyltransferase RlmN (392 aa).

The active-site Proton acceptor is the glutamate 116. A Radical SAM core domain is found at 122–364 (EEGRGTLCVS…SPIRTPRGED (243 aa)). A disulfide bridge connects residues cysteine 129 and cysteine 369. Residues cysteine 136, cysteine 140, and cysteine 143 each contribute to the [4Fe-4S] cluster site. Residues 195 to 196 (GE), serine 227, 249 to 251 (SFH), and asparagine 326 each bind S-adenosyl-L-methionine. Cysteine 369 (S-methylcysteine intermediate) is an active-site residue.

This sequence belongs to the radical SAM superfamily. RlmN family. The cofactor is [4Fe-4S] cluster.

The protein resides in the cytoplasm. It catalyses the reaction adenosine(2503) in 23S rRNA + 2 reduced [2Fe-2S]-[ferredoxin] + 2 S-adenosyl-L-methionine = 2-methyladenosine(2503) in 23S rRNA + 5'-deoxyadenosine + L-methionine + 2 oxidized [2Fe-2S]-[ferredoxin] + S-adenosyl-L-homocysteine. It carries out the reaction adenosine(37) in tRNA + 2 reduced [2Fe-2S]-[ferredoxin] + 2 S-adenosyl-L-methionine = 2-methyladenosine(37) in tRNA + 5'-deoxyadenosine + L-methionine + 2 oxidized [2Fe-2S]-[ferredoxin] + S-adenosyl-L-homocysteine. In terms of biological role, specifically methylates position 2 of adenine 2503 in 23S rRNA and position 2 of adenine 37 in tRNAs. m2A2503 modification seems to play a crucial role in the proofreading step occurring at the peptidyl transferase center and thus would serve to optimize ribosomal fidelity. The polypeptide is Dual-specificity RNA methyltransferase RlmN (Cereibacter sphaeroides (strain ATCC 17025 / ATH 2.4.3) (Rhodobacter sphaeroides)).